A 572-amino-acid chain; its full sequence is Neuronal acetylcholine receptor subunit alpha-9-I (572 aa).

Positions 1-19 (MKTVVLLTWISCWIDVCTS) are cleaved as a signal peptide. Residues 20-232 (AQGRYAQKLL…YTLHLKRRSL (213 aa)) lie on the Extracellular side of the membrane. N51 carries N-linked (GlcNAc...) asparagine glycosylation. The cysteines at positions 149 and 163 are disulfide-linked. An N-linked (GlcNAc...) asparagine glycan is attached at N164. C213 and C214 are joined by a disulfide. The next 3 membrane-spanning stretches (helical) occupy residues 233 to 253 (FYIFNLLLPCFLISFLAPLGF), 263 to 283 (VSLGVTVLLALTVFQLMVAES), and 297 to 317 (YIATMTMITASTSLTIFIMNI). At 318–550 (HFCGAEAKPV…WKKVAKVMDR (233 aa)) the chain is on the cytoplasmic side. A disordered region spans residues 405–458 (GHLQNHHSTHQNHLDNCRYANGGHRDDHYSNRSNQNHHSNRSQTSKGEGGEEKR). Residues 435–447 (NRSNQNHHSNRSQ) show a composition bias toward low complexity. The chain crosses the membrane as a helical span at residues 551 to 571 (FFMWIFFIMVFLMSILIIGKA).

This sequence belongs to the ligand-gated ion channel (TC 1.A.9) family. Acetylcholine receptor (TC 1.A.9.1) subfamily. Expressed in the liver, olfactory mucosa, pituitary gland, hair cells of the saccule and spleen.

The protein localises to the postsynaptic cell membrane. Its subcellular location is the cell membrane. The sequence is that of Neuronal acetylcholine receptor subunit alpha-9-I (nachra9) from Oncorhynchus mykiss (Rainbow trout).